The chain runs to 1488 residues: Chromosome partition protein MukB (1488 aa).

34 to 41 lines the ATP pocket; it reads GGNGAGKS. Coiled-coil stretches lie at residues 326–418, 444–472, and 509–602; these read LEAD…QYNQ, LDTF…QTAH, and RHLA…QRAP. Positions 666 to 783 are flexible hinge; it reads PGGAEDQRLN…SLPIFGRAAR (118 aa). 3 coiled-coil regions span residues 835–923, 977–1116, and 1209–1265; these read EAEI…AKLE, EMLS…AKAG, and VEAI…LQSV. The disordered stretch occupies residues 1049–1074; the sequence is ADSGAEERARQRRDELHAQLSNNRSR. Residues 1051–1065 show a composition bias toward basic and acidic residues; that stretch reads SGAEERARQRRDELH.

It belongs to the SMC family. MukB subfamily. Homodimerization via its hinge domain. Binds to DNA via its C-terminal region. Interacts, and probably forms a ternary complex, with MukE and MukF via its C-terminal region. The complex formation is stimulated by calcium or magnesium. Interacts with tubulin-related protein FtsZ.

It localises to the cytoplasm. It is found in the nucleoid. Functionally, plays a central role in chromosome condensation, segregation and cell cycle progression. Functions as a homodimer, which is essential for chromosome partition. Involved in negative DNA supercoiling in vivo, and by this means organize and compact chromosomes. May achieve or facilitate chromosome segregation by condensation DNA from both sides of a centrally located replisome during cell division. The sequence is that of Chromosome partition protein MukB from Salmonella arizonae (strain ATCC BAA-731 / CDC346-86 / RSK2980).